The primary structure comprises 459 residues: Nuclear distribution protein PAC1-2 (459 aa).

Positions 56-83 form a coiled coil; the sequence is TSIVRLQKKIMDLESRNAALQTELANLT. WD repeat units lie at residues 108–149, 151–191, 195–244, 246–284, 306–348, 350–389, 394–438, and 440–459; these read SHRD…RTVK, HTRA…KNIR, GHDH…KTLR, HTAW…SDHK, QYLA…LGTL, GHDN…KCVK, AHER…DTPD, and QVRC…VFAD.

The protein belongs to the WD repeat LIS1/nudF family. Self-associates. Interacts with NDL1 and dynein.

The protein resides in the cytoplasm. The protein localises to the cytoskeleton. It localises to the spindle pole. Its function is as follows. Positively regulates the activity of the minus-end directed microtubule motor protein dynein. May enhance dynein-mediated microtubule sliding by targeting dynein to the microtubule plus end. Required for nuclear migration during vegetative growth as well as development. Required for retrograde early endosome (EE) transport from the hyphal tip. Required for localization of dynein to the mitotic spindle poles. Recruits additional proteins to the dynein complex at SPBs. The sequence is that of Nuclear distribution protein PAC1-2 from Uncinocarpus reesii (strain UAMH 1704).